Reading from the N-terminus, the 438-residue chain is 23S rRNA (uracil(1939)-C(5))-methyltransferase RlmD (438 aa).

The TRAM domain occupies 10–68 (RVTTRQTITVKVHDLDSFGQGVAHHNGKALFVQGALPDEVAEVSIIEDKRHFSRGVATR). Positions 81, 87, 90, and 168 each coordinate [4Fe-4S] cluster. Residues Gln-271, Phe-300, Asn-305, Glu-321, Asn-348, and Asp-369 each coordinate S-adenosyl-L-methionine. Cys-395 (nucleophile) is an active-site residue.

This sequence belongs to the class I-like SAM-binding methyltransferase superfamily. RNA M5U methyltransferase family. RlmD subfamily.

The enzyme catalyses uridine(1939) in 23S rRNA + S-adenosyl-L-methionine = 5-methyluridine(1939) in 23S rRNA + S-adenosyl-L-homocysteine + H(+). Functionally, catalyzes the formation of 5-methyl-uridine at position 1939 (m5U1939) in 23S rRNA. The sequence is that of 23S rRNA (uracil(1939)-C(5))-methyltransferase RlmD from Erwinia tasmaniensis (strain DSM 17950 / CFBP 7177 / CIP 109463 / NCPPB 4357 / Et1/99).